We begin with the raw amino-acid sequence, 151 residues long: HTH-type transcriptional regulator FL11 (151 aa).

The 62-residue stretch at 5 to 66 (LDDIDKKIIE…VVNPEALGYN (62 aa)) folds into the HTH asnC-type domain. A DNA-binding region (H-T-H motif) is located at residues 24–43 (LREISKITGLAESTIHERIK). 98–104 (ETTGDYD) provides a ligand contact to L-arginine. L-lysine is bound by residues Asn-118, Asp-122, and 133-135 (THT). L-arginine-binding positions include Asp-122 and 133–135 (THT).

In terms of assembly, homodimer. Binds DNA as a dimer and an octamer.

In the famine mode, FL11 forms dimers and acts as a repressor, leading to growth arrest. In the feast mode, in the presence of high concentrations of lysine or arginine, four dimers assemble into an octamer and cover the fl11 and lysine biosynthesis promoters. This leads to the inhibition of fl11 expression and lysine biosynthesis, decrease of the FL11 concentration in the cell, derepression of the target genes and activation of the metabolism. Its function is as follows. DNA-binding protein involved in the repression of transcription of a large number of genes, thereby arresting growth, in response to environmental changes. This chain is HTH-type transcriptional regulator FL11, found in Pyrococcus furiosus (strain ATCC 43587 / DSM 3638 / JCM 8422 / Vc1).